We begin with the raw amino-acid sequence, 446 residues long: Chromosomal replication initiator protein DnaA (446 aa).

A domain I, interacts with DnaA modulators region spans residues 1 to 92; sequence MENISDLWNS…SQAEEEIDLP (92 aa). The domain II stretch occupies residues 93-109; sequence PAKPNAAQDDSNHLPQS. The interval 110–326 is domain III, AAA+ region; the sequence is MLNPKYTFDT…GALIRVVAYS (217 aa). Residues Gly154, Gly156, Lys157, and Thr158 each contribute to the ATP site. The segment at 327 to 446 is domain IV, binds dsDNA; it reads SLINKDINAD…QVEEINDILK (120 aa).

This sequence belongs to the DnaA family. Oligomerizes as a right-handed, spiral filament on DNA at oriC.

The protein resides in the cytoplasm. Functionally, plays an essential role in the initiation and regulation of chromosomal replication. ATP-DnaA binds to the origin of replication (oriC) to initiate formation of the DNA replication initiation complex once per cell cycle. Binds the DnaA box (a 9 base pair repeat at the origin) and separates the double-stranded (ds)DNA. Forms a right-handed helical filament on oriC DNA; dsDNA binds to the exterior of the filament while single-stranded (ss)DNA is stabiized in the filament's interior. The ATP-DnaA-oriC complex binds and stabilizes one strand of the AT-rich DNA unwinding element (DUE), permitting loading of DNA polymerase. After initiation quickly degrades to an ADP-DnaA complex that is not apt for DNA replication. Binds acidic phospholipids. The protein is Chromosomal replication initiator protein DnaA of Bacillus anthracis (strain A0248).